We begin with the raw amino-acid sequence, 290 residues long: L-proline cis-3-hydroxylase 1 (290 aa).

Residues His-107, Asp-109, and His-158 each contribute to the Fe cation site. Arg-168 is a binding site for 2-oxoglutarate.

This sequence belongs to the L-proline cis-4-/cis-3-hydroxylase family. In terms of assembly, homodimer. Fe(2+) serves as cofactor.

It carries out the reaction L-proline + 2-oxoglutarate + O2 = cis-3-hydroxy-L-proline + succinate + CO2. Its activity is regulated as follows. Inhibited by metal ions such as Co(2+), Zn(2+), Ni(2+) or Cu(2+). Is also inhibited by EDTA in vitro. Unlike the procollagen-proline cis-3- and trans-4-hydroxylases from mammals, does not necessarily require L-ascorbate for activity although it does increase the activity of the enzyme. Dioxygenase that catalyzes the 2-oxoglutarate-dependent selective hydroxylation of free L-proline to cis-3-hydroxy-L-proline (cis-3-Hyp). D-proline, trans-4-hydroxy-L-proline, cis-4-hydroxy-L-proline, cis-4-hydroxy-D-proline, and 3,4-dehydro-DL-proline are not substrates. The polypeptide is L-proline cis-3-hydroxylase 1 (Streptomyces sp).